The primary structure comprises 95 residues: Protein TusB (95 aa).

This sequence belongs to the DsrH/TusB family. As to quaternary structure, heterohexamer, formed by a dimer of trimers. The hexameric TusBCD complex contains 2 copies each of TusB, TusC and TusD. The TusBCD complex interacts with TusE.

It localises to the cytoplasm. Part of a sulfur-relay system required for 2-thiolation of 5-methylaminomethyl-2-thiouridine (mnm(5)s(2)U) at tRNA wobble positions. The protein is Protein TusB of Erwinia tasmaniensis (strain DSM 17950 / CFBP 7177 / CIP 109463 / NCPPB 4357 / Et1/99).